A 241-amino-acid chain; its full sequence is Homeobox protein TGIF2LX (241 aa).

Disordered stretches follow at residues 1 to 56 (MEAA…PKGY) and 115 to 213 (RHGN…EYPD). The segment covering 21-39 (AKTQSPAQDTSTVSRNSAD) has biased composition (polar residues). The homeobox; TALE-type DNA-binding region spans 48-111 (EHTKKPKGYL…INARRRILPD (64 aa)).

The protein belongs to the TALE/TGIF homeobox family.

It localises to the nucleus. In terms of biological role, may have a transcription role in testis. The chain is Homeobox protein TGIF2LX (TGIF2LX) from Hylobates lar (Lar gibbon).